Consider the following 201-residue polypeptide: Dephospho-CoA kinase (201 aa).

In terms of domain architecture, DPCK spans 4–201; that stretch reads IIGITGGIAS…LEGGRQDDRD (198 aa). An ATP-binding site is contributed by 12 to 17; the sequence is ASGKST.

The protein belongs to the CoaE family.

It is found in the cytoplasm. The enzyme catalyses 3'-dephospho-CoA + ATP = ADP + CoA + H(+). It functions in the pathway cofactor biosynthesis; coenzyme A biosynthesis; CoA from (R)-pantothenate: step 5/5. Catalyzes the phosphorylation of the 3'-hydroxyl group of dephosphocoenzyme A to form coenzyme A. This is Dephospho-CoA kinase from Streptococcus pneumoniae serotype 4 (strain ATCC BAA-334 / TIGR4).